The sequence spans 293 residues: Pyridoxal 5'-phosphate synthase subunit PdxS (293 aa).

Asp23 contacts D-ribose 5-phosphate. The active-site Schiff-base intermediate with D-ribose 5-phosphate is Lys80. Gly152 lines the D-ribose 5-phosphate pocket. Arg164 is a binding site for D-glyceraldehyde 3-phosphate. Residues Gly213 and 234–235 (GS) each bind D-ribose 5-phosphate.

The protein belongs to the PdxS/SNZ family. In the presence of PdxT, forms a dodecamer of heterodimers.

It carries out the reaction aldehydo-D-ribose 5-phosphate + D-glyceraldehyde 3-phosphate + L-glutamine = pyridoxal 5'-phosphate + L-glutamate + phosphate + 3 H2O + H(+). The protein operates within cofactor biosynthesis; pyridoxal 5'-phosphate biosynthesis. In terms of biological role, catalyzes the formation of pyridoxal 5'-phosphate from ribose 5-phosphate (RBP), glyceraldehyde 3-phosphate (G3P) and ammonia. The ammonia is provided by the PdxT subunit. Can also use ribulose 5-phosphate and dihydroxyacetone phosphate as substrates, resulting from enzyme-catalyzed isomerization of RBP and G3P, respectively. The protein is Pyridoxal 5'-phosphate synthase subunit PdxS of Syntrophus aciditrophicus (strain SB).